The following is a 299-amino-acid chain: NAD kinase (299 aa).

Asp-78 (proton acceptor) is an active-site residue. NAD(+)-binding positions include 78–79 (DG), 151–152 (ND), Lys-162, Arg-179, Asp-181, 192–197 (TAYALS), and Gln-252.

This sequence belongs to the NAD kinase family. A divalent metal cation is required as a cofactor.

It localises to the cytoplasm. The catalysed reaction is NAD(+) + ATP = ADP + NADP(+) + H(+). Its function is as follows. Involved in the regulation of the intracellular balance of NAD and NADP, and is a key enzyme in the biosynthesis of NADP. Catalyzes specifically the phosphorylation on 2'-hydroxyl of the adenosine moiety of NAD to yield NADP. The protein is NAD kinase of Coxiella burnetii (strain CbuG_Q212) (Coxiella burnetii (strain Q212)).